We begin with the raw amino-acid sequence, 39 residues long: MTTEKIYPIFTVRWLAVHGLAVPTVFFLGSISAMQFIQR.

Residues 14–30 form a helical membrane-spanning segment; the sequence is WLAVHGLAVPTVFFLGS. His-18 serves as a coordination point for heme.

It belongs to the PsbE/PsbF family. Heterodimer of an alpha subunit and a beta subunit. PSII is composed of 1 copy each of membrane proteins PsbA, PsbB, PsbC, PsbD, PsbE, PsbF, PsbH, PsbI, PsbJ, PsbK, PsbL, PsbM, PsbT, PsbX, PsbY, PsbZ, Psb30/Ycf12, at least 3 peripheral proteins of the oxygen-evolving complex and a large number of cofactors. It forms dimeric complexes. Requires heme b as cofactor.

It localises to the plastid. Its subcellular location is the chloroplast thylakoid membrane. In terms of biological role, this b-type cytochrome is tightly associated with the reaction center of photosystem II (PSII). PSII is a light-driven water:plastoquinone oxidoreductase that uses light energy to abstract electrons from H(2)O, generating O(2) and a proton gradient subsequently used for ATP formation. It consists of a core antenna complex that captures photons, and an electron transfer chain that converts photonic excitation into a charge separation. The sequence is that of Cytochrome b559 subunit beta from Gnetum gnemon (Spanish joint-fir).